The sequence spans 199 residues: Probable cobalt-precorrin-6B C(15)-methyltransferase (decarboxylating) (199 aa).

Residues T24, 48–52 (GCGTG), D72, and A101 contribute to the S-adenosyl-L-methionine site.

This sequence belongs to the methyltransferase superfamily. Archaeal-type CbiT family.

It carries out the reaction Co-precorrin-6B + S-adenosyl-L-methionine = Co-precorrin-7 + S-adenosyl-L-homocysteine + CO2. Its pathway is cofactor biosynthesis; adenosylcobalamin biosynthesis; cob(II)yrinate a,c-diamide from sirohydrochlorin (anaerobic route): step 8/10. Its function is as follows. Catalyzes the methylation of C-15 in cobalt-precorrin-6B followed by the decarboxylation of C-12 to form cobalt-precorrin-7. The chain is Probable cobalt-precorrin-6B C(15)-methyltransferase (decarboxylating) from Saccharolobus solfataricus (strain ATCC 35092 / DSM 1617 / JCM 11322 / P2) (Sulfolobus solfataricus).